Consider the following 116-residue polypeptide: Nitrogen regulatory PII-like protein (116 aa).

The protein belongs to the P(II) protein family. As to quaternary structure, needs to interact with NrgA in order to localize correctly to the membrane.

It localises to the cell membrane. In terms of biological role, required for full induction of the nrgAB operon under conditions of ammonium limitation. This chain is Nitrogen regulatory PII-like protein (nrgB), found in Bacillus subtilis (strain 168).